A 148-amino-acid chain; its full sequence is Ribonuclease 4 (148 aa).

The first 29 residues, Met1 to Gly29, serve as a signal peptide directing secretion. Gln30 is modified (pyrrolidone carboxylic acid). The dUMP site is built by Arg36, His41, Lys69, Asn72, and Thr73. The active-site Proton acceptor is the His41. 4 cysteine pairs are disulfide-bonded: Cys54–Cys110, Cys68–Cys121, Cys86–Cys136, and Cys93–Cys100. Residue His145 is the Proton donor of the active site. Phe146 is a dUMP binding site.

The protein belongs to the pancreatic ribonuclease family. As to expression, expressed in the cortical tubules of the kidney (at protein level). Also expressed in the medullary tubules of the kidney.

The protein resides in the secreted. In terms of biological role, cleaves preferentially after uridine bases. Has antimicrobial activity against uropathogenic E.coli (UPEC). Probably contributes to urinary tract sterility. The polypeptide is Ribonuclease 4 (Rnase4) (Mus musculus (Mouse)).